The sequence spans 651 residues: LEAF RUST 10 DISEASE-RESISTANCE LOCUS RECEPTOR-LIKE PROTEIN KINASE-like 1.2 (651 aa).

Positions 1 to 26 (MNPSTPSLLYTSIFFYFTIIATQTLS) are cleaved as a signal peptide. The Extracellular portion of the chain corresponds to 27-264 (LDPKFKACEP…NDKRRRVIVK (238 aa)). Asn-88, Asn-114, Asn-130, Asn-136, Asn-155, Asn-193, and Asn-213 each carry an N-linked (GlcNAc...) asparagine glycan. Residues 265-285 (VLIGASAAVVGLIAASIFWYV) traverse the membrane as a helical segment. At 286–651 (YHRRKTKSYR…DSVIVKWDSK (366 aa)) the chain is on the cytoplasmic side. In terms of domain architecture, Protein kinase spans 341–613 (FDPSKELGDG…PCMSHVQDTL (273 aa)). ATP is bound by residues 347-355 (LGDGGFGTV) and Lys-369. Tyr-415 carries the post-translational modification Phosphotyrosine. Asp-465 (proton acceptor) is an active-site residue. Ser-498 carries the post-translational modification Phosphoserine. Phosphothreonine is present on residues Thr-499 and Thr-504. Tyr-512 carries the post-translational modification Phosphotyrosine.

This sequence belongs to the protein kinase superfamily. Ser/Thr protein kinase family.

It is found in the cell membrane. The protein localises to the membrane. The catalysed reaction is L-seryl-[protein] + ATP = O-phospho-L-seryl-[protein] + ADP + H(+). It carries out the reaction L-threonyl-[protein] + ATP = O-phospho-L-threonyl-[protein] + ADP + H(+). Its function is as follows. Probable receptor-like serine/threonine-protein kinase involved in abscisic acid (ABA) signaling. Acts as a positive regulator of abiotic stress response. This Arabidopsis thaliana (Mouse-ear cress) protein is LEAF RUST 10 DISEASE-RESISTANCE LOCUS RECEPTOR-LIKE PROTEIN KINASE-like 1.2.